The chain runs to 578 residues: Interleukin-10 receptor subunit alpha (578 aa).

The first 21 residues, 1-21, serve as a signal peptide directing secretion; sequence MLPCLVVLLAALLSLRLGSDA. Topologically, residues 22-235 are extracellular; that stretch reads HGTELPSPPS…LTRQYFTVTN (214 aa). N-linked (GlcNAc...) asparagine glycans are attached at residues N50, N74, N110, N154, N177, and N189. C56 and C75 are joined by a disulfide. C202 and C223 form a disulfide bridge. A helical transmembrane segment spans residues 236–256; that stretch reads VIIFFAFVLLLSGALAYCLAL. The Cytoplasmic segment spans residues 257-578; sequence QLYVRRRKKL…PLISSLQSSE (322 aa). Residues 313–436 are disordered; the sequence is LHGSTDSGFG…PPEPEVPGEE (124 aa). The segment covering 316 to 332 has biased composition (polar residues); that stretch reads STDSGFGSTKPSLQTEE. The short motif at 318–323 is the BTRC recognition motif element; the sequence is DSGFGS. Over residues 357 to 371 the composition is skewed to low complexity; that stretch reads GDSCSSGSSNSTDSG. The segment covering 377 to 396 has biased composition (polar residues); the sequence is PSLSPSTGPTWEQQVGSNSR.

Belongs to the type II cytokine receptor family. Interacts with IL10. Interacts with IL10RB. Interacts (via its cytoplasmic domain) with JAK1 (via N-terminus). Interacts with BTRC; this interaction leads to IL10RA ubiquitination and subsequent degradation. Interacts with STAT3. As to quaternary structure, (Microbial infection) Interacts with human cytomegalovirus protein IL10. In terms of assembly, (Microbial infection) Interacts with Epstein-Barr virus protein IL10. In terms of processing, phosphorylated. Phosphorylation of the cytoplasmic tail induced STAT3 activation. Ubiquitinated by BTRC; ubiquitination leads to endocytosis and subsequent degradation of IL10RA. Primarily expressed in hematopoetic cells including B-cells, T-cells, NK cells, monocytes and macrophages. Not expressed in non-hematopoetic cells such as fibroblasts or endothelial cells.

It localises to the cell membrane. The protein resides in the cytoplasm. Cell surface receptor for the cytokine IL10 that participates in IL10-mediated anti-inflammatory functions, limiting excessive tissue disruption caused by inflammation. Upon binding to IL10, induces a conformational change in IL10RB, allowing IL10RB to bind IL10 as well. In turn, the heterotetrameric assembly complex, composed of two subunits of IL10RA and IL10RB, activates the kinases JAK1 and TYK2 that are constitutively associated with IL10RA and IL10RB respectively. These kinases then phosphorylate specific tyrosine residues in the intracellular domain in IL10RA leading to the recruitment and subsequent phosphorylation of STAT3. Once phosphorylated, STAT3 homodimerizes, translocates to the nucleus and activates the expression of anti-inflammatory genes. In addition, IL10RA-mediated activation of STAT3 inhibits starvation-induced autophagy. The sequence is that of Interleukin-10 receptor subunit alpha (IL10RA) from Homo sapiens (Human).